A 121-amino-acid chain; its full sequence is Small ribosomal subunit protein uS13 (121 aa).

The disordered stretch occupies residues 97-121; that stretch reads VRGQRTRTNARTRRGARKTVAGKKK. Over residues 100 to 121 the composition is skewed to basic residues; the sequence is QRTRTNARTRRGARKTVAGKKK.

The protein belongs to the universal ribosomal protein uS13 family. Part of the 30S ribosomal subunit. Forms a loose heterodimer with protein S19. Forms two bridges to the 50S subunit in the 70S ribosome.

Located at the top of the head of the 30S subunit, it contacts several helices of the 16S rRNA. In the 70S ribosome it contacts the 23S rRNA (bridge B1a) and protein L5 of the 50S subunit (bridge B1b), connecting the 2 subunits; these bridges are implicated in subunit movement. Contacts the tRNAs in the A and P-sites. The polypeptide is Small ribosomal subunit protein uS13 (Synechococcus sp. (strain WH7803)).